A 375-amino-acid chain; its full sequence is MAALMESVVGRALKFSSTANFRSIRRGETPTLCIKSFSTIMSPPSKAIVYEEHGSPDSVTRLVNLPPVEVKENDVCVKMIAAPINPSDINRIEGVYPVRPPVPAVGGYEGVGEVYAVGSNVNGFSPGDWVIPSPPSSGTWQTYVVKEESVWHKIDKECPMEYAATITVNPLTALRMLEDFVNLNSGDSVVQNGATSIVGQCVIQLARLRGISTINLIRDRAGSDEAREQLKALGADEVFSESQLNVKNVKSLLGNLPEPALGFNCVGGNAASLVLKYLREGGTMVTYGGMSKKPITVSTTSFIFKDLALRGFWLQSWLSMGKVKECREMIDYLLGLARDGKLKYETELVPFEEFPVALDKALGKLGRQPKQVITF.

The transit peptide at 1-37 (MAALMESVVGRALKFSSTANFRSIRRGETPTLCIKSF) directs the protein to the mitochondrion. Y96 serves as the catalytic Proton donor. Residues N169, 195–198 (TSIV), 218–220 (RDR), 287–290 (YGGM), 312–314 (FWL), and K370 each bind NADP(+).

Belongs to the zinc-containing alcohol dehydrogenase family. Quinone oxidoreductase subfamily. Homodimer.

It localises to the mitochondrion. The enzyme catalyses a 2,3-saturated acyl-[ACP] + NADP(+) = a (2E)-enoyl-[ACP] + NADPH + H(+). Functionally, catalyzes the NADPH-dependent reduction of trans-2-enoyl thioesters in mitochondrial fatty acid synthesis (fatty acid synthesis type II). Fatty acid chain elongation in mitochondria uses acyl carrier protein (ACP) as an acyl group carrier, but the enzyme accepts both ACP and CoA thioesters as substrates in vitro. The sequence is that of Enoyl-[acyl-carrier-protein] reductase, mitochondrial from Arabidopsis thaliana (Mouse-ear cress).